We begin with the raw amino-acid sequence, 1892 residues long: Protein TIC 214 (1892 aa).

6 consecutive transmembrane segments (helical) span residues 18–38, 64–84, 87–107, 124–144, 172–192, and 221–241; these read IINS…FSIG, FITG…HLAL, PHTI…WNNH, LSIQ…HFIL, VGWL…LVWI, and IFSI…PSPI. Disordered regions lie at residues 250-300, 794-814, and 1581-1609; these read SKTE…EGWD, REEQ…ENKR, and RIQE…LGPV. The segment covering 256 to 268 has biased composition (acidic residues); that stretch reads VESEEEKDVEIET. The span at 1581-1602 shows a compositional bias: basic and acidic residues; sequence RIQEEKEPASQGEKERGSDIEN.

This sequence belongs to the TIC214 family. Part of the Tic complex.

Its subcellular location is the plastid. The protein resides in the chloroplast inner membrane. In terms of biological role, involved in protein precursor import into chloroplasts. May be part of an intermediate translocation complex acting as a protein-conducting channel at the inner envelope. The protein is Protein TIC 214 of Nicotiana tomentosiformis (Tobacco).